Here is a 313-residue protein sequence, read N- to C-terminus: tRNA dimethylallyltransferase (313 aa).

An ATP-binding site is contributed by 17-24; sequence GPTASGKT. 19–24 contacts substrate; sequence TASGKT. Interaction with substrate tRNA regions lie at residues 42 to 45, 166 to 170, 247 to 252, and 280 to 287; these read DSAL, QRLSR, RCVGYR, and KRQITWLR.

Belongs to the IPP transferase family. In terms of assembly, monomer. Mg(2+) is required as a cofactor.

It carries out the reaction adenosine(37) in tRNA + dimethylallyl diphosphate = N(6)-dimethylallyladenosine(37) in tRNA + diphosphate. Functionally, catalyzes the transfer of a dimethylallyl group onto the adenine at position 37 in tRNAs that read codons beginning with uridine, leading to the formation of N6-(dimethylallyl)adenosine (i(6)A). The polypeptide is tRNA dimethylallyltransferase (Proteus mirabilis (strain HI4320)).